The sequence spans 634 residues: Threonine--tRNA ligase (634 aa).

One can recognise a TGS domain in the interval Met-1–Thr-61. The catalytic stretch occupies residues Asp-241 to Pro-532. Residues Cys-332, His-383, and His-509 each coordinate Zn(2+).

Belongs to the class-II aminoacyl-tRNA synthetase family. As to quaternary structure, homodimer. Zn(2+) serves as cofactor.

It localises to the cytoplasm. It catalyses the reaction tRNA(Thr) + L-threonine + ATP = L-threonyl-tRNA(Thr) + AMP + diphosphate + H(+). Its function is as follows. Catalyzes the attachment of threonine to tRNA(Thr) in a two-step reaction: L-threonine is first activated by ATP to form Thr-AMP and then transferred to the acceptor end of tRNA(Thr). Also edits incorrectly charged L-seryl-tRNA(Thr). This chain is Threonine--tRNA ligase, found in Francisella tularensis subsp. mediasiatica (strain FSC147).